The sequence spans 701 residues: Elongation factor G (701 aa).

Positions 11 to 287 (NKVRNIGIMA…AVVDYLPSPL (277 aa)) constitute a tr-type G domain. GTP-binding positions include 20-27 (AHIDAGKT), 84-88 (DTPGH), and 138-141 (NKMD).

Belongs to the TRAFAC class translation factor GTPase superfamily. Classic translation factor GTPase family. EF-G/EF-2 subfamily.

The protein localises to the cytoplasm. Catalyzes the GTP-dependent ribosomal translocation step during translation elongation. During this step, the ribosome changes from the pre-translocational (PRE) to the post-translocational (POST) state as the newly formed A-site-bound peptidyl-tRNA and P-site-bound deacylated tRNA move to the P and E sites, respectively. Catalyzes the coordinated movement of the two tRNA molecules, the mRNA and conformational changes in the ribosome. This Mycobacterium sp. (strain JLS) protein is Elongation factor G.